The following is a 780-amino-acid chain: Pendrin (780 aa).

The Cytoplasmic segment spans residues Met1–Asp87. A helical membrane pass occupies residues Ile88–Leu108. Residue Ala109 is a topological domain, extracellular. A helical transmembrane segment spans residues Ala110 to Phe130. Residues Gly131–His135 are Cytoplasmic-facing. The chain crosses the membrane as a helical span at residues Ile136–Ala156. The Extracellular portion of the chain corresponds to Pro157 to Thr191. A helical membrane pass occupies residues Leu192–Val212. Topologically, residues Arg213–Pro218 are cytoplasmic. A helical transmembrane segment spans residues Leu219–Val239. The Extracellular segment spans residues Leu240 to Asn263. A helical membrane pass occupies residues Ile264–Ala284. Over Val285 to Lys295 the chain is Cytoplasmic. Residues Ile296–Gly316 traverse the membrane as a helical segment. Residues Ala317–Gly344 are Extracellular-facing. A helical transmembrane segment spans residues Leu345–Val365. Over Ser366–Glu384 the chain is Cytoplasmic. The helical transmembrane segment at Phe385–Thr405 threads the bilayer. Topologically, residues Ala406–Gln421 are extracellular. The chain crosses the membrane as a helical span at residues Val422–Leu442. The Cytoplasmic portion of the chain corresponds to Glu443–Ser448. Residues Val449–Pro469 traverse the membrane as a helical segment. Over Arg470–Cys486 the chain is Extracellular. The helical transmembrane segment at Ile487–Leu507 threads the bilayer. Residues Thr508 to Ser780 are Cytoplasmic-facing. The region spanning His535–Leu729 is the STAS domain.

This sequence belongs to the SLC26A/SulP transporter (TC 2.A.53) family. As to expression, highly expressed in the kidney (at protein level).

The protein localises to the cell membrane. It is found in the apical cell membrane. The enzyme catalyses chloride(in) = chloride(out). The catalysed reaction is iodide(out) = iodide(in). It catalyses the reaction hydrogencarbonate(in) + chloride(out) = hydrogencarbonate(out) + chloride(in). It carries out the reaction iodide(in) + hydrogencarbonate(out) = iodide(out) + hydrogencarbonate(in). The enzyme catalyses iodide(in) + chloride(out) = iodide(out) + chloride(in). The catalysed reaction is formate(in) + chloride(out) = formate(out) + chloride(in). Functionally, sodium-independent transporter of chloride and iodide. Mediates electroneutral chloride-bicarbonate and chloride-formate exchange with 1:1 stoichiometry. Mediates electroneutral iodide-chloride and iodide-bicarbonate exchange. The sequence is that of Pendrin (Slc26a4) from Rattus norvegicus (Rat).